The chain runs to 56 residues: Protein hunchback (56 aa).

3 C2H2-type zinc fingers span residues 1 to 5, 11 to 33, and 39 to 56; these read HVRNH, HKCG…MKSH, and YRCA…SLKL.

The protein belongs to the hunchback C2H2-type zinc-finger protein family.

The protein resides in the nucleus. Functionally, gap class segmentation protein that controls development of head structures. The protein is Protein hunchback (hb) of Bithynia tentaculata (Spire snail).